A 111-amino-acid polypeptide reads, in one-letter code: uncharacterized protein (111 aa).

Belongs to the SUI1 family.

This is an uncharacterized protein from Synechocystis sp. (strain ATCC 27184 / PCC 6803 / Kazusa).